A 271-amino-acid polypeptide reads, in one-letter code: DNA repair protein RecO (271 aa).

Basic and acidic residues predominate over residues 249–264 (VRVEDSVRQDGDRDST). The segment at 249–271 (VRVEDSVRQDGDRDSTTRTSSPA) is disordered.

The protein belongs to the RecO family.

Involved in DNA repair and RecF pathway recombination. This Rhodococcus jostii (strain RHA1) protein is DNA repair protein RecO.